A 133-amino-acid polypeptide reads, in one-letter code: Protein NrdI (133 aa).

The protein belongs to the NrdI family.

Probably involved in ribonucleotide reductase function. This is Protein NrdI from Cronobacter sakazakii (strain ATCC BAA-894) (Enterobacter sakazakii).